Consider the following 194-residue polypeptide: Pyridoxine/pyridoxamine 5'-phosphate oxidase (194 aa).

Residues 42-47, 57-58, Arg-63, Lys-64, and Gln-86 each bind FMN; these read RVVLLK and FT. Lys-47 contributes to the substrate binding site. The substrate site is built by Tyr-104, Arg-108, and Ser-112. Residues 121–122 and Trp-166 contribute to the FMN site; that span reads QS. 172 to 174 lines the substrate pocket; sequence RIH. Position 176 (Arg-176) interacts with FMN.

The protein belongs to the pyridoxamine 5'-phosphate oxidase family. In terms of assembly, homodimer. FMN is required as a cofactor.

It carries out the reaction pyridoxamine 5'-phosphate + O2 + H2O = pyridoxal 5'-phosphate + H2O2 + NH4(+). The catalysed reaction is pyridoxine 5'-phosphate + O2 = pyridoxal 5'-phosphate + H2O2. Its pathway is cofactor metabolism; pyridoxal 5'-phosphate salvage; pyridoxal 5'-phosphate from pyridoxamine 5'-phosphate: step 1/1. The protein operates within cofactor metabolism; pyridoxal 5'-phosphate salvage; pyridoxal 5'-phosphate from pyridoxine 5'-phosphate: step 1/1. Its function is as follows. Catalyzes the oxidation of either pyridoxine 5'-phosphate (PNP) or pyridoxamine 5'-phosphate (PMP) into pyridoxal 5'-phosphate (PLP). This chain is Pyridoxine/pyridoxamine 5'-phosphate oxidase, found in Ehrlichia ruminantium (strain Welgevonden).